We begin with the raw amino-acid sequence, 492 residues long: Probable protein phosphatase 2C 33 (492 aa).

Positions 1–46 (MGSCLSAESRSPRPGSPCSPAFSVRKRKNSKKRPGSRNSSFDYRRE) are disordered. Over residues 24 to 35 (VRKRKNSKKRPG) the composition is skewed to basic residues. Residues 64–393 (VACIYTQQGK…DDCAAVCLYL (330 aa)) form the PPM-type phosphatase domain. The Mn(2+) site is built by aspartate 100, glycine 101, aspartate 338, and aspartate 384. Positions 406–468 (SISKLEDGEE…ADNLDSEPGT (63 aa)) are disordered. Over residues 412 to 427 (DGEEEELKATTEDDDA) the composition is skewed to acidic residues. Residues 441-460 (SGKEIALDESETEKLIKEAD) show a composition bias toward basic and acidic residues.

The protein belongs to the PP2C family. It depends on Mg(2+) as a cofactor. Mn(2+) is required as a cofactor.

The enzyme catalyses O-phospho-L-seryl-[protein] + H2O = L-seryl-[protein] + phosphate. It carries out the reaction O-phospho-L-threonyl-[protein] + H2O = L-threonyl-[protein] + phosphate. The protein is Probable protein phosphatase 2C 33 (PPC6-1) of Arabidopsis thaliana (Mouse-ear cress).